We begin with the raw amino-acid sequence, 498 residues long: Diacylglycerol O-acyltransferase 1A (498 aa).

A disordered region spans residues 1–67 (MAISDEPETV…ANSQPQQKQD (67 aa)). The next 7 membrane-spanning stretches (helical) occupy residues 102–122 (HAGL…RLII), 146–166 (WPLF…FIVE), 178–198 (VVVV…VLVI), 203–223 (SAFL…LKLV), 253–273 (YPYN…TLCY), 295–315 (LIIF…PIVQ), and 342–362 (VWLC…AELL). Residues 369 to 375 (FYQDWWN) carry the FYXDWWN motif motif. A run of 3 helical transmembrane segments spans residues 410–430 (AVAL…CIAV), 432–452 (CHIF…LVFI), and 465–485 (VGNM…CVLL). Residue His424 is part of the active site.

It belongs to the membrane-bound acyltransferase family. Sterol o-acyltransferase subfamily. As to expression, highly expressed in flowers and pods. Expressed at low levels in roots, stems and leaves.

The protein resides in the endoplasmic reticulum membrane. It carries out the reaction an acyl-CoA + a 1,2-diacyl-sn-glycerol = a triacyl-sn-glycerol + CoA. It functions in the pathway glycerolipid metabolism; triacylglycerol biosynthesis. Functionally, major contributor to triacylglycerol (TAG) synthesis and oil accumulation in developing seeds. Catalyzes the acylation of the sn-3 hydroxy group of sn-1,2-diacylglycerol using acyl-CoA. Has a marked preference for oleoyl-CoA (18:1) and sn-1,2-dioleoylglycerol over vernoloyl-CoA and sn-1,2-divernoloylglycerol. Can use oleoyl-CoA, linoleoyl-CoA and linolenoyl-CoA as substrates. The protein is Diacylglycerol O-acyltransferase 1A of Glycine max (Soybean).